Reading from the N-terminus, the 355-residue chain is Protein-glutamate methylesterase/protein-glutamine glutaminase 3 (355 aa).

Residues 8 to 123 form the Response regulatory domain; the sequence is SVLIVDDSGM…AREVEDFVDK (116 aa). 4-aspartylphosphate is present on aspartate 59. The tract at residues 139 to 161 is disordered; that stretch reads RSAPAAGPTPVPQAPPPPAAPPA. Positions 145–159 are enriched in pro residues; it reads GPTPVPQAPPPPAAP. The region spanning 160–350 is the CheB-type methylesterase domain; sequence PAGDGGIIAI…ASLLEITGAS (191 aa). Residues serine 172, histidine 199, and aspartate 292 contribute to the active site.

It belongs to the CheB family. In terms of processing, phosphorylated by CheA. Phosphorylation of the N-terminal regulatory domain activates the methylesterase activity.

The protein resides in the cytoplasm. The catalysed reaction is [protein]-L-glutamate 5-O-methyl ester + H2O = L-glutamyl-[protein] + methanol + H(+). It catalyses the reaction L-glutaminyl-[protein] + H2O = L-glutamyl-[protein] + NH4(+). In terms of biological role, involved in chemotaxis. Part of a chemotaxis signal transduction system that modulates chemotaxis in response to various stimuli. Catalyzes the demethylation of specific methylglutamate residues introduced into the chemoreceptors (methyl-accepting chemotaxis proteins or MCP) by CheR. Also mediates the irreversible deamidation of specific glutamine residues to glutamic acid. This is Protein-glutamate methylesterase/protein-glutamine glutaminase 3 from Paramagnetospirillum magneticum (strain ATCC 700264 / AMB-1) (Magnetospirillum magneticum).